A 419-amino-acid chain; its full sequence is Interferon regulatory factor 3 (419 aa).

Residue T3 is modified to Phosphothreonine. A DNA-binding region (IRF tryptophan pentad repeat) is located at residues 5-111 (KPRILPWLIS…DPHKIYEFVT (107 aa)). Phosphoserine is present on S14. T75 carries the post-translational modification Phosphothreonine. A phosphoserine mark is found at S97 and S123. The segment at 118 to 137 (PEPDTSLDLSGRYSTSDTHE) is disordered. A mediates interaction with ZDHHC11 region spans residues 140 to 419 (LDKLLSGMDL…LRDLVEDMDF (280 aa)). Residue K191 forms a Glycyl lysine isopeptide (Lys-Gly) (interchain with G-Cter in ISG15) linkage. Residues 198–358 (DEWEFQVTVF…SWPQDEPWVK (161 aa)) form an interaction with HERC5 region. T235 and T251 each carry phosphothreonine. C265 and C287 are disulfide-bonded. Glycyl lysine isopeptide (Lys-Gly) (interchain with G-Cter in ISG15) cross-links involve residues K358 and K364. K364 carries the N6-acetyllysine modification. A Phosphoserine modification is found at S383. S384 carries the post-translational modification Diphosphoserine. S384 bears the Phosphoserine; by TBK1 mark. Residue S394 is modified to Phosphoserine; by IKKE. At S396 the chain carries Phosphoserine. Phosphothreonine is present on T402.

It belongs to the IRF family. Monomer. Homodimer; phosphorylation-induced. Interacts (when phosphorylated) with CREBBP. Interacts with MAVS (via phosphorylated pLxIS motif). Interacts with TICAM1 (via phosphorylated pLxIS motif). Interacts with STING1 (via phosphorylated pLxIS motif). Interacts with IKBKE and TBK1. Interacts with TICAM2. Interacts with RBCK1. Interacts with HERC5. Interacts with DDX3X; the interaction allows the phosphorylation and activation of IRF3 by IKBKE. Interacts with TRIM21 and ULK1, in the presence of TRIM21; this interaction leads to IRF3 degradation by autophagy. Interacts with RIOK3; RIOK3 probably mediates the interaction of TBK1 with IRF3. Interacts with ILRUN; the interaction inhibits IRF3 binding to its DNA consensus sequence. Interacts with LYAR; this interaction impairs IRF3 DNA-binding activity. Interacts with TRAF3. Interacts with ZDHHC11; ZDHHC11 recruits IRF3 to STING1 upon DNA virus infection and thereby promotes IRF3 activation. Interacts with HSP90AA1; the interaction mediates IRF3 association with TOMM70. Interacts with BCL2; the interaction decreases upon Sendai virus infection. Interacts with BAX; the interaction is direct, increases upon virus infection and mediates the formation of the apoptosis complex TOMM70:HSP90AA1:IRF3:BAX. Interacts with DDX56. Interacts with NBR1. In terms of assembly, (Microbial infection) Interacts with Porcine epidemic diarrhea virus E protein; this interaction prevents IRF3 translocation to the nucleus and thereby prevents type I interferon production. As to quaternary structure, (Microbial infection) Interacts with African swine fever virus (ASFV) P14.5/E120R; this interaction interferes with the recruitment of IRF3 to TBK1, which in turn suppresses IRF3 phosphorylation, decreasing interferon production via the cGAS/STING pathway. (Microbial infection) Interacts with African swine fever virus (ASFV) MGF360-14L; this interaction mediates degradation of IRF3 through TRIM21 and ubiquitin-meditated proteolysis. In terms of assembly, (Microbial infection) Interacts with African swine fever virus (ASFV) E301R; this interaction inhibits nuclear translocation of IRF3 to the nucleus. As to quaternary structure, (Microbial infection) Interacts with African swine fever virus (ASFV) minor capsid protein M1249L; this interaction mediates IRF3 degradation. In terms of processing, constitutively phosphorylated on many Ser/Thr residues. Activated following phosphorylation by TBK1 and IKBKE. Innate adapter proteins, such as MAVS, STING1 or TICAM1, are first activated by viral RNA, cytosolic DNA, and bacterial lipopolysaccharide (LPS), respectively, leading to activation of the kinases TBK1 and IKBKE. These kinases then phosphorylate the adapter proteins on the pLxIS motif, leading to recruitment of IRF3, thereby licensing IRF3 for phosphorylation by TBK1. Phosphorylation at Ser-384 is followed by pyrophosphorylation at the same residue, promoting phosphorylation at Ser-394. Phosphorylated IRF3 dissociates from the adapter proteins, dimerizes, and then enters the nucleus to induce IFNs. Pyrophosphorylated by UAP1 following phosphorylation at Ser-384 by TBK1. Pyrophosphorylation promotes subsequent phosphorylation at Ser-394, leading to homodimerization of IRF3. Post-translationally, acetylation at Lys-364 by KAT8 inhibits recruimtent to promoters and transcription factor activity. Acetylation by KAT8 is promoted by phosphorylation at Ser-394. In terms of processing, ubiquitinated; ubiquitination involves RBCK1 leading to proteasomal degradation. Polyubiquitinated; ubiquitination involves TRIM21 leading to proteasomal degradation. Ubiquitinated by UBE3C, leading to its degradation. Deubiquitinated by USP5 on both 'Lys-48'-linked unanchored and 'Lys-63'-linked anchored polyubiquitin, leading to inhibition of antiviral innate immunity. ISGylated by HERC5 resulting in sustained IRF3 activation and in the inhibition of IRF3 ubiquitination by disrupting PIN1 binding. The phosphorylation state of IRF3 does not alter ISGylation. Post-translationally, (Microbial infection) Phosphorylated by pseudorabies virus protein kinase UL13; leading to decreased IRF3 binding to the IRF3-responsive promoters and downstream ISG expression. In terms of processing, proteolytically cleaved by apoptotic caspases during apoptosis, leading to its inactivation. Cleavage by CASP3 during virus-induced apoptosis inactivates it, preventing cytokine overproduction.

It localises to the cytoplasm. Its subcellular location is the nucleus. The protein localises to the mitochondrion. Its activity is regulated as follows. In the absence of viral infection, maintained as a monomer in an autoinhibited state. Phosphorylation by TBK1 and IKBKE disrupts this autoinhibition leading to the liberation of the DNA-binding and dimerization activities and its nuclear localization where it can activate type I IFN and ISG genes. Phosphorylation and activation follow the following steps: innate adapter proteins, such as MAVS, STING1 or TICAM1, are first activated by viral RNA, cytosolic DNA and bacterial lipopolysaccharide (LPS), respectively, leading to activation of the kinases TBK1 and IKBKE. These kinases then phosphorylate the adapter proteins on their pLxIS motif, leading to recruitment of IRF3, thereby licensing IRF3 for phosphorylation by TBK1. Phosphorylated IRF3 dissociates from the adapter proteins, dimerizes, and then enters the nucleus to induce IFNs. Key transcriptional regulator of type I interferon (IFN)-dependent immune responses which plays a critical role in the innate immune response against DNA and RNA viruses. Regulates the transcription of type I IFN genes (IFN-alpha and IFN-beta) and IFN-stimulated genes (ISG) by binding to an interferon-stimulated response element (ISRE) in their promoters. Acts as a more potent activator of the IFN-beta (IFNB) gene than the IFN-alpha (IFNA) gene and plays a critical role in both the early and late phases of the IFNA/B gene induction. Found in an inactive form in the cytoplasm of uninfected cells and following viral infection, double-stranded RNA (dsRNA), or toll-like receptor (TLR) signaling, is phosphorylated by IKBKE and TBK1 kinases. This induces a conformational change, leading to its dimerization and nuclear localization and association with CREB binding protein (CREBBP) to form dsRNA-activated factor 1 (DRAF1), a complex which activates the transcription of the type I IFN and ISG genes. Can activate distinct gene expression programs in macrophages and can induce significant apoptosis in primary macrophages. In Sus scrofa (Pig), this protein is Interferon regulatory factor 3 (IRF3).